The primary structure comprises 269 residues: Formamidopyrimidine-DNA glycosylase (269 aa).

Residue P2 is the Schiff-base intermediate with DNA of the active site. Residue E3 is the Proton donor of the active site. The active-site Proton donor; for beta-elimination activity is K57. H90, R109, and K150 together coordinate DNA. The FPG-type zinc-finger motif lies at 235–269 (RVYGRNGEPCRTCGTPIETAKHGQRSTFFCRRCQV). The active-site Proton donor; for delta-elimination activity is the R259.

Belongs to the FPG family. Monomer. Zn(2+) serves as cofactor.

The enzyme catalyses Hydrolysis of DNA containing ring-opened 7-methylguanine residues, releasing 2,6-diamino-4-hydroxy-5-(N-methyl)formamidopyrimidine.. The catalysed reaction is 2'-deoxyribonucleotide-(2'-deoxyribose 5'-phosphate)-2'-deoxyribonucleotide-DNA = a 3'-end 2'-deoxyribonucleotide-(2,3-dehydro-2,3-deoxyribose 5'-phosphate)-DNA + a 5'-end 5'-phospho-2'-deoxyribonucleoside-DNA + H(+). Involved in base excision repair of DNA damaged by oxidation or by mutagenic agents. Acts as a DNA glycosylase that recognizes and removes damaged bases. Has a preference for oxidized purines, such as 7,8-dihydro-8-oxoguanine (8-oxoG). Has AP (apurinic/apyrimidinic) lyase activity and introduces nicks in the DNA strand. Cleaves the DNA backbone by beta-delta elimination to generate a single-strand break at the site of the removed base with both 3'- and 5'-phosphates. In Pectobacterium atrosepticum (strain SCRI 1043 / ATCC BAA-672) (Erwinia carotovora subsp. atroseptica), this protein is Formamidopyrimidine-DNA glycosylase.